Consider the following 1071-residue polypeptide: ATP-dependent helicase/deoxyribonuclease subunit B (1071 aa).

Belongs to the helicase family. AddB/RexB type 2 subfamily. As to quaternary structure, heterodimer of AddA and RexB. Requires Mg(2+) as cofactor.

Its function is as follows. The heterodimer acts as both an ATP-dependent DNA helicase and an ATP-dependent, dual-direction single-stranded exonuclease. Recognizes the chi site generating a DNA molecule suitable for the initiation of homologous recombination. This subunit has 5' -&gt; 3' nuclease activity but not helicase activity. The chain is ATP-dependent helicase/deoxyribonuclease subunit B from Streptococcus pyogenes serotype M3 (strain ATCC BAA-595 / MGAS315).